The primary structure comprises 327 residues: Probable cell division protein WhiA (327 aa).

Positions 275–308 form a DNA-binding region, H-T-H motif; it reads SLEELGRLADPPMTKDAVAGRIRRLLSMADRKAK. The segment at 304 to 327 is disordered; it reads DRKAKQDGIPDTESAVTPDLLEDA.

It belongs to the WhiA family.

Its function is as follows. Involved in cell division and chromosome segregation. This chain is Probable cell division protein WhiA, found in Mycobacterium sp. (strain MCS).